The following is a 285-amino-acid chain: Transmembrane protein 158 (285 aa).

A signal peptide spans M1–G20. The segment at G20–G43 is disordered. The span at T31–G43 shows a compositional bias: polar residues. Residue N73 is glycosylated (N-linked (GlcNAc...) asparagine). The next 2 helical transmembrane spans lie at L215–F235 and A263–A283.

Belongs to the TMEM158 family. N-glycosylated. Detected only in the brain.

The protein localises to the membrane. Receptor for brain injury-derived neurotrophic peptide (BINP), a synthetic 13-mer peptide. The sequence is that of Transmembrane protein 158 (Tmem158) from Rattus norvegicus (Rat).